Consider the following 130-residue polypeptide: Transcription antitermination protein NusB (130 aa).

Belongs to the NusB family.

Functionally, involved in transcription antitermination. Required for transcription of ribosomal RNA (rRNA) genes. Binds specifically to the boxA antiterminator sequence of the ribosomal RNA (rrn) operons. The sequence is that of Transcription antitermination protein NusB from Sulfurovum sp. (strain NBC37-1).